A 124-amino-acid polypeptide reads, in one-letter code: Protein CYSTEINE-RICH TRANSMEMBRANE MODULE 10 (124 aa).

Positions 1–103 (MSYQDPQHPV…PKNKKDKKDS (103 aa)) are disordered. Composition is skewed to pro residues over residues 27 to 40 (AGYP…PPQY) and 65 to 88 (GYPP…PPPH). Residues 101–118 (KDSGGFMEGCLAMLCCCV) traverse the membrane as a helical segment.

This sequence belongs to the CYSTM1 family. Heterodimers. Interacts with CYSTM7 and WIH1/CYSTM13. Mostly expressed in stems and,at low levels, in stems, roots, flowers, siliques and leaves.

The protein resides in the cell membrane. Its subcellular location is the cytoplasm. Functionally, involved in resistance to abiotic stress. This Arabidopsis thaliana (Mouse-ear cress) protein is Protein CYSTEINE-RICH TRANSMEMBRANE MODULE 10.